A 230-amino-acid polypeptide reads, in one-letter code: Proteasome subunit beta 2 (230 aa).

Basic and acidic residues predominate over residues 1–10 (MHDPENRLTD). A disordered region spans residues 1-29 (MHDPENRLTDAYEPEVGNLPNEDSGRDEE). Residues 1–35 (MHDPENRLTDAYEPEVGNLPNEDSGRDEENVVKTG) constitute a propeptide, removed in mature form; by autocatalysis. The active-site Nucleophile is threonine 36.

This sequence belongs to the peptidase T1B family. The 20S proteasome core is composed of 14 alpha and 14 beta subunits that assemble into four stacked heptameric rings, resulting in a barrel-shaped structure. The two inner rings, each composed of seven catalytic beta subunits, are sandwiched by two outer rings, each composed of seven alpha subunits. The catalytic chamber with the active sites is on the inside of the barrel. Has a gated structure, the ends of the cylinder being occluded by the N-termini of the alpha-subunits. Is capped at one or both ends by the proteasome regulatory ATPase, PAN.

It is found in the cytoplasm. The enzyme catalyses Cleavage of peptide bonds with very broad specificity.. With respect to regulation, the formation of the proteasomal ATPase PAN-20S proteasome complex, via the docking of the C-termini of PAN into the intersubunit pockets in the alpha-rings, triggers opening of the gate for substrate entry. Interconversion between the open-gate and close-gate conformations leads to a dynamic regulation of the 20S proteasome proteolysis activity. Component of the proteasome core, a large protease complex with broad specificity involved in protein degradation. The sequence is that of Proteasome subunit beta 2 from Haloarcula marismortui (strain ATCC 43049 / DSM 3752 / JCM 8966 / VKM B-1809) (Halobacterium marismortui).